A 361-amino-acid polypeptide reads, in one-letter code: MFKRHKSLERKRELLFQGLPQSTMKNNARNFHSLSQLVLSAGPLKTTTAVKHSKTTHFEIEILDAHTRKQICIVDKVTQTSTIHDVKQKFHKACPKWYPSRIGLQLEYGGPYLRDYITVQSVAASSIITLYFTDLGQQVGWTTVFLAEYSGPLLIYLLFYLRSSYIYDVKESTRWPRHPVVHLAFFCHCIHYIRLLLETLFVHKVSTGHSPMKNLIKGCAFYWGFTSWMAYYINHPRYTPPSFGNRQVIVSAINFLFCEAGNHFINTVLAHPNHTGSNACFPSPNYNPFTWLFFLVSCPNYTYEIGSWISFTVMTQTLPVGIFTILMTIQMSLWARKKHKIYRKKFNSYVHRKSAIIPLIL.

Ser33 and Ser35 each carry phosphoserine. A run of 4 helical transmembrane segments spans residues 139-159 (VGWT…YLLF), 181-201 (VHLA…ETLF), 215-235 (LIKG…YINH), and 309-329 (ISFT…LMTI).

The protein belongs to the steroid 5-alpha reductase family. As to expression, expression is highest in the heart with very low to almost undetectable levels in brain, skeletal muscle, stomach, pancreas, liver, kidney, small intestine, and uterus.

It is found in the membrane. The protein resides in the endoplasmic reticulum. The polypeptide is Trans-2,3-enoyl-CoA reductase-like (Tecrl) (Mus musculus (Mouse)).